Here is a 525-residue protein sequence, read N- to C-terminus: GMP synthase [glutamine-hydrolyzing] (525 aa).

One can recognise a Glutamine amidotransferase type-1 domain in the interval 8-207 (KILILDFGSQ…ALDICGCAAN (200 aa)). The active-site Nucleophile is the C85. Active-site residues include H181 and E183. The GMPS ATP-PPase domain maps to 208–400 (WKPSSIIEDA…LGLPYNMLYR (193 aa)). Position 235 to 241 (235 to 241 (SGGVDSS)) interacts with ATP.

Homodimer.

It catalyses the reaction XMP + L-glutamine + ATP + H2O = GMP + L-glutamate + AMP + diphosphate + 2 H(+). Its pathway is purine metabolism; GMP biosynthesis; GMP from XMP (L-Gln route): step 1/1. Its function is as follows. Catalyzes the synthesis of GMP from XMP. This is GMP synthase [glutamine-hydrolyzing] from Shewanella sp. (strain ANA-3).